A 220-amino-acid chain; its full sequence is MAAAVSAKLVKELRDKTGAGMMDCKKALAATEGDANKAVEWLRQKGIASAEKKSGRTAAEGAIGSYIHTGARVGVLVEVNCETDFVARGDMFQSLLRDVSMQVAACPNVEYVTTDEIPNEIREREKAIEMGRDDLEGKPEQMKEKIVEGRIGKRLKELALMEQPFIKDSSITVADLVKQTAGKIGENVKVRRFTRYTLGEGIEVEENDFAAEVASMQNAG.

The interval 83–86 (TDFV) is involved in Mg(2+) ion dislocation from EF-Tu.

Belongs to the EF-Ts family.

It localises to the cytoplasm. Its function is as follows. Associates with the EF-Tu.GDP complex and induces the exchange of GDP to GTP. It remains bound to the aminoacyl-tRNA.EF-Tu.GTP complex up to the GTP hydrolysis stage on the ribosome. This Synechococcus sp. (strain CC9605) protein is Elongation factor Ts.